Reading from the N-terminus, the 23-residue chain is Caerin-4.3 (23 aa).

As to expression, expressed by the skin parotoid and/or rostral glands.

Its subcellular location is the secreted. Antibacterial peptide, that adopts an alpha helical conformation which can disrupt bacterial membranes. Each caerin displays a different antimicrobial specificity. The protein is Caerin-4.3 of Ranoidea caerulea (Green tree frog).